Reading from the N-terminus, the 662-residue chain is Glycogen debranching enzyme (662 aa).

D338 serves as the catalytic Nucleophile. The Proton donor role is filled by E373.

This sequence belongs to the glycosyl hydrolase 13 family.

The catalysed reaction is Hydrolysis of (1-&gt;6)-alpha-D-glucosidic linkages to branches with degrees of polymerization of three or four glucose residues in limit dextrin.. It functions in the pathway glycan degradation; glycogen degradation. In terms of biological role, removes maltotriose and maltotetraose chains that are attached by 1,6-alpha-linkage to the limit dextrin main chain, generating a debranched limit dextrin. The chain is Glycogen debranching enzyme from Yersinia enterocolitica serotype O:8 / biotype 1B (strain NCTC 13174 / 8081).